A 379-amino-acid chain; its full sequence is Probable purine permease 11 (379 aa).

Transmembrane regions (helical) follow at residues W43–L63, W76–L96, I114–V134, Y144–A164, F167–L187, I203–M223, V239–F259, V294–V313, I314–F330, and M334–Y354.

Belongs to the purine permeases (TC 2.A.7.14) family. In terms of assembly, may form a complex with the potassium channel subunit KAT1.

Its subcellular location is the membrane. This Arabidopsis thaliana (Mouse-ear cress) protein is Probable purine permease 11 (PUP11).